A 1220-amino-acid chain; its full sequence is DNA-directed RNA polymerase subunit beta' (1220 aa).

Zn(2+) is bound by residues Cys-60, Cys-62, Cys-75, and Cys-78. The Mg(2+) site is built by Asp-449, Asp-451, and Asp-453. Residues Cys-818, Cys-892, Cys-899, and Cys-902 each coordinate Zn(2+).

It belongs to the RNA polymerase beta' chain family. In terms of assembly, the RNAP catalytic core consists of 2 alpha, 1 beta, 1 beta' and 1 omega subunit. When a sigma factor is associated with the core the holoenzyme is formed, which can initiate transcription. Mg(2+) serves as cofactor. Requires Zn(2+) as cofactor.

It catalyses the reaction RNA(n) + a ribonucleoside 5'-triphosphate = RNA(n+1) + diphosphate. In terms of biological role, DNA-dependent RNA polymerase catalyzes the transcription of DNA into RNA using the four ribonucleoside triphosphates as substrates. The polypeptide is DNA-directed RNA polymerase subunit beta' (Lacticaseibacillus paracasei (strain ATCC 334 / BCRC 17002 / CCUG 31169 / CIP 107868 / KCTC 3260 / NRRL B-441) (Lactobacillus paracasei)).